The primary structure comprises 489 residues: 5'-AMP-activated protein kinase subunit gamma-3 (489 aa).

The segment at 1–95 is disordered; that stretch reads MEPELEHTLP…TRQEATFPKA (95 aa). A compositionally biased stretch (polar residues) spans 32 to 47; that stretch reads GENSWPSPAVATSSER. 3 consecutive CBS domains span residues 197-258, 280-340, and 355-415; these read MATS…RSPL, CFKP…LLPR, and TFRD…HLDM. Residues arginine 225, 240 to 245, valine 285, 306 to 307, and lysine 325 each bind ADP; these read MLTITD and HR. Residues arginine 225, 240–245, valine 285, histidine 306, 306–307, lysine 325, threonine 355, alanine 360, 381–382, 397–400, arginine 424, leucine 432, histidine 453, 453–454, and 469–472 contribute to the AMP site; these read MLTITD, HR, SA, SRFD, and SLSD. Residues arginine 225, 240 to 245, valine 285, 306 to 307, arginine 307, and lysine 325 contribute to the ATP site; these read MLTITD and HR. The AMPK pseudosubstrate motif lies at 293-314; the sequence is LFEAVYALIKNRIHRLPVLDPV. ADP is bound by residues 397–400, arginine 424, leucine 432, and 453–454; these read SRFD and HR. Residues 397–400, arginine 424, leucine 432, and 453–454 contribute to the ATP site; these read SRFD and HR. Residues 427–486 enclose the CBS 4 domain; the sequence is CLEGVLSCQPHESLGEVIDRIAREQVHRLVLVDETQHLLGVVSLSDILQALVLSPAGIDA.

Belongs to the 5'-AMP-activated protein kinase gamma subunit family. AMPK is a heterotrimer of an alpha catalytic subunit (PRKAA1 or PRKAA2), a beta (PRKAB1 or PRKAB2) and a gamma non-catalytic subunits (PRKAG1, PRKAG2 or PRKAG3). Interacts with FNIP1 and FNIP2. In terms of processing, phosphorylated by ULK1; leading to negatively regulate AMPK activity and suggesting the existence of a regulatory feedback loop between ULK1 and AMPK. Post-translationally, glycosylated; O-GlcNAcylated by OGT, promoting the AMP-activated protein kinase (AMPK) activity.

In terms of biological role, AMP/ATP-binding subunit of AMP-activated protein kinase (AMPK), an energy sensor protein kinase that plays a key role in regulating cellular energy metabolism. In response to reduction of intracellular ATP levels, AMPK activates energy-producing pathways and inhibits energy-consuming processes: inhibits protein, carbohydrate and lipid biosynthesis, as well as cell growth and proliferation. AMPK acts via direct phosphorylation of metabolic enzymes, and by longer-term effects via phosphorylation of transcription regulators. AMPK also acts as a regulator of cellular polarity by remodeling the actin cytoskeleton; probably by indirectly activating myosin. The AMPK gamma3 subunit is a non-catalytic subunit with a regulatory role in muscle energy metabolism. It mediates binding to AMP, ADP and ATP, leading to AMPK activation or inhibition: AMP-binding results in allosteric activation of alpha catalytic subunit (PRKAA1 or PRKAA2) both by inducing phosphorylation and preventing dephosphorylation of catalytic subunits. ADP also stimulates phosphorylation, without stimulating already phosphorylated catalytic subunit. ATP promotes dephosphorylation of catalytic subunit, rendering the AMPK enzyme inactive. In Mus musculus (Mouse), this protein is 5'-AMP-activated protein kinase subunit gamma-3 (Prkag3).